The following is a 943-amino-acid chain: Isoleucine--tRNA ligase 1 (943 aa).

The 'HIGH' region motif lies at 58–68 (PYANGTIHIGH). Glu567 provides a ligand contact to L-isoleucyl-5'-AMP. The short motif at 608-612 (KMSKS) is the 'KMSKS' region element. Residue Lys611 coordinates ATP. 4 residues coordinate Zn(2+): Cys906, Cys909, Cys926, and Cys929.

This sequence belongs to the class-I aminoacyl-tRNA synthetase family. IleS type 1 subfamily. As to quaternary structure, monomer. Requires Zn(2+) as cofactor.

It is found in the cytoplasm. It carries out the reaction tRNA(Ile) + L-isoleucine + ATP = L-isoleucyl-tRNA(Ile) + AMP + diphosphate. Catalyzes the attachment of isoleucine to tRNA(Ile). As IleRS can inadvertently accommodate and process structurally similar amino acids such as valine, to avoid such errors it has two additional distinct tRNA(Ile)-dependent editing activities. One activity is designated as 'pretransfer' editing and involves the hydrolysis of activated Val-AMP. The other activity is designated 'posttransfer' editing and involves deacylation of mischarged Val-tRNA(Ile). Functionally, confers resistance to the antibiotic mupirocin (pseudomonic acid A), an Ile-analog produced by P.fluorescens NCIMB 10586 itself that competitively inhibits activation by Ile-tRNA synthetase, thus inhibiting protein biosynthesis. This Pseudomonas fluorescens protein is Isoleucine--tRNA ligase 1 (ileS1).